Here is a 395-residue protein sequence, read N- to C-terminus: ATP phosphoribosyltransferase regulatory subunit (395 aa).

This sequence belongs to the class-II aminoacyl-tRNA synthetase family. HisZ subfamily. In terms of assembly, heteromultimer composed of HisG and HisZ subunits.

It is found in the cytoplasm. It functions in the pathway amino-acid biosynthesis; L-histidine biosynthesis; L-histidine from 5-phospho-alpha-D-ribose 1-diphosphate: step 1/9. In terms of biological role, required for the first step of histidine biosynthesis. May allow the feedback regulation of ATP phosphoribosyltransferase activity by histidine. The chain is ATP phosphoribosyltransferase regulatory subunit from Pseudomonas fluorescens (strain ATCC BAA-477 / NRRL B-23932 / Pf-5).